Here is a 453-residue protein sequence, read N- to C-terminus: tRNA modification GTPase MnmE (453 aa).

(6S)-5-formyl-5,6,7,8-tetrahydrofolate-binding residues include Arg-22, Glu-79, and Lys-119. The TrmE-type G domain maps to 215-376 (GMKVVIAGRP…LKQHLKSLMG (162 aa)). Residue Asn-225 participates in K(+) binding. GTP is bound by residues 225 to 230 (NAGKSS), 244 to 250 (TEIAGTT), 269 to 272 (DTAG), and 334 to 337 (NKAD). Ser-229 contributes to the Mg(2+) binding site. 3 residues coordinate K(+): Thr-244, Ile-246, and Thr-249. Thr-250 contributes to the Mg(2+) binding site. Position 453 (Lys-453) interacts with (6S)-5-formyl-5,6,7,8-tetrahydrofolate.

It belongs to the TRAFAC class TrmE-Era-EngA-EngB-Septin-like GTPase superfamily. TrmE GTPase family. In terms of assembly, homodimer. Heterotetramer of two MnmE and two MnmG subunits. It depends on K(+) as a cofactor.

It localises to the cytoplasm. Its function is as follows. Exhibits a very high intrinsic GTPase hydrolysis rate. Involved in the addition of a carboxymethylaminomethyl (cmnm) group at the wobble position (U34) of certain tRNAs, forming tRNA-cmnm(5)s(2)U34. The sequence is that of tRNA modification GTPase MnmE from Shewanella denitrificans (strain OS217 / ATCC BAA-1090 / DSM 15013).